Reading from the N-terminus, the 299-residue chain is tRNA dimethylallyltransferase (299 aa).

11 to 18 provides a ligand contact to ATP; sequence GPTAVGKT. 13–18 contacts substrate; that stretch reads TAVGKT. The interval 36–39 is interaction with substrate tRNA; it reads DSQQ.

The protein belongs to the IPP transferase family. In terms of assembly, monomer. Mg(2+) is required as a cofactor.

It catalyses the reaction adenosine(37) in tRNA + dimethylallyl diphosphate = N(6)-dimethylallyladenosine(37) in tRNA + diphosphate. In terms of biological role, catalyzes the transfer of a dimethylallyl group onto the adenine at position 37 in tRNAs that read codons beginning with uridine, leading to the formation of N6-(dimethylallyl)adenosine (i(6)A). This chain is tRNA dimethylallyltransferase, found in Streptococcus pyogenes serotype M4 (strain MGAS10750).